We begin with the raw amino-acid sequence, 303 residues long: Methionyl-tRNA formyltransferase (303 aa).

110-113 serves as a coordination point for (6S)-5,6,7,8-tetrahydrofolate; sequence SLLP.

Belongs to the Fmt family.

It catalyses the reaction L-methionyl-tRNA(fMet) + (6R)-10-formyltetrahydrofolate = N-formyl-L-methionyl-tRNA(fMet) + (6S)-5,6,7,8-tetrahydrofolate + H(+). Functionally, attaches a formyl group to the free amino group of methionyl-tRNA(fMet). The formyl group appears to play a dual role in the initiator identity of N-formylmethionyl-tRNA by promoting its recognition by IF2 and preventing the misappropriation of this tRNA by the elongation apparatus. This is Methionyl-tRNA formyltransferase from Ehrlichia ruminantium (strain Welgevonden).